Reading from the N-terminus, the 412-residue chain is CCA-adding enzyme (412 aa).

Ser41 and Lys44 together coordinate ATP. 2 residues coordinate CTP: Ser41 and Lys44. The Mg(2+) site is built by Asp53, Asp55, and Asp106. ATP-binding residues include His129, Lys149, and Tyr158. CTP-binding residues include His129, Lys149, and Tyr158.

Belongs to the tRNA nucleotidyltransferase/poly(A) polymerase family. Archaeal CCA-adding enzyme subfamily. In terms of assembly, homodimer. Forms a tetramer upon binding two tRNAs. However, tRNA-induced tetramer formation is not required for CCA addition. It depends on Mg(2+) as a cofactor.

The catalysed reaction is a tRNA precursor + 2 CTP + ATP = a tRNA with a 3' CCA end + 3 diphosphate. It carries out the reaction a tRNA with a 3' CCA end + 2 CTP + ATP = a tRNA with a 3' CCACCA end + 3 diphosphate. Functionally, catalyzes the addition and repair of the essential 3'-terminal CCA sequence in tRNAs without using a nucleic acid template. Adds these three nucleotides in the order of C, C, and A to the tRNA nucleotide-73, using CTP and ATP as substrates and producing inorganic pyrophosphate. tRNA 3'-terminal CCA addition is required both for tRNA processing and repair. Also involved in tRNA surveillance by mediating tandem CCA addition to generate a CCACCA at the 3' terminus of unstable tRNAs. While stable tRNAs receive only 3'-terminal CCA, unstable tRNAs are marked with CCACCA and rapidly degraded. The structural flexibility of RNA controls the choice between CCA versus CCACCA addition: following the first CCA addition cycle, nucleotide-binding to the active site triggers a clockwise screw motion, producing torque on the RNA. This ejects stable RNAs, whereas unstable RNAs are refolded while bound to the enzyme and subjected to a second CCA catalytic cycle. The protein is CCA-adding enzyme of Saccharolobus shibatae (strain ATCC 51178 / DSM 5389 / JCM 8931 / NBRC 15437 / B12) (Sulfolobus shibatae).